The chain runs to 351 residues: Formyl peptide receptor-related sequence 1 (351 aa).

Over 1–27 (METNYSIPLNGSDVVIYDSTISRVLWI) the chain is Extracellular. Asparagine 4 and asparagine 10 each carry an N-linked (GlcNAc...) asparagine glycan. The chain crosses the membrane as a helical span at residues 28–50 (LSMVVVSITFFLGVLGNGLVIWV). At 51–61 (AGFRMPHTVTT) the chain is on the cytoplasmic side. The helical transmembrane segment at 62 to 83 (IWYLNLALADFSFTATLPFLLV) threads the bilayer. Topologically, residues 84–100 (EMAMKEKWPFGWFLCKL) are extracellular. The cysteines at positions 98 and 176 are disulfide-linked. A helical membrane pass occupies residues 101-121 (VHIAVDVNLFGSVFLIAVIAL). The Cytoplasmic segment spans residues 122–140 (DRCICVLHPVWAQNHRTVS). A helical transmembrane segment spans residues 141-162 (LARNVVVGSWIFALILTLPLFL). Over 163 to 205 (FLTTVRDARGDVHCRLSFVSWGNSVEERLNTAITFVTTRGIIR) the chain is Extracellular. Residues 206-226 (FIVSFSLPMSFVAICYGLITT) form a helical membrane-spanning segment. At 227–242 (KIHKKAFVNSSRPFRV) the chain is on the cytoplasmic side. A helical transmembrane segment spans residues 243–266 (LTGVVASFFICWFPFQLVALLGTV). Residues 267–286 (WLKEMQFSGSYKIIGRLVNP) are Extracellular-facing. A helical transmembrane segment spans residues 287 to 306 (TSSLAFFNSCLNPILYVFMG). The Cytoplasmic segment spans residues 307–351 (QDFQERLIHSLSSRLQRALSEDSGHISDTRTNLASLPEDIEIKAI).

It belongs to the G-protein coupled receptor 1 family. In terms of tissue distribution, expressed exclusively in vomeronasal neurons. Expressed in 0.6 % of a subset of sensory neurons located in the basal layer of the vomeronasal organ. Each neuron appears to express only one receptor gene. Expressed mostly in neutrophils, followed by spleen and lung and expressed at very low levels in heart and liver.

It is found in the cell membrane. Its function is as follows. Low affinity receptor for N-formyl-methionyl peptides. Receptor for lipoxin A4. May have an olfactory function associated with the identification of pathogens or of pathogenic states. The polypeptide is Formyl peptide receptor-related sequence 1 (Fpr-s1) (Mus musculus (Mouse)).